A 128-amino-acid chain; its full sequence is Orchestin (128 aa).

A signal peptide spans 1-20; that stretch reads MNKVFIIGVCLFIVSQAVLA. Residues 23 to 95 are disordered; that stretch reads WDSDESSDER…DEDSDDSQES (73 aa). Composition is skewed to basic and acidic residues over residues 30-49 and 56-81; these read DERL…KLVV and EDSN…RKLS. The span at 84 to 93 shows a compositional bias: acidic residues; it reads TSDEDSDDSQ.

Post-translationally, phosphorylated on Ser and Tyr residues. Calcium-binding activity is dependent on serine phosphorylation but not on tyrosine phosphorylation. Posterior caeca epithelium of the gut.

The protein resides in the secreted. Plays a role in cuticle calcification. May induce precipitation of the calcium stored in the posterior caeca as calcium carbonate. The polypeptide is Orchestin (Cryptorchestia cavimana (Amphipod)).